The sequence spans 314 residues: Olfactory receptor 9I1 (314 aa).

Topologically, residues 1–25 are extracellular; the sequence is MAKNNLTRVTEFILMGFMDHPKLEI. Asn5 carries N-linked (GlcNAc...) asparagine glycosylation. A helical membrane pass occupies residues 26–46; that stretch reads PLFLVFLSFYLVTLLGNVGMI. Over 47-54 the chain is Cytoplasmic; that stretch reads MLIQVDVK. The helical transmembrane segment at 55–75 threads the bilayer; the sequence is LYTPMYFFLSHLSLLDACYTS. Residues 76–99 lie on the Extracellular side of the membrane; that stretch reads VITPQILATLATGKTVISYGHCAA. Cys97 and Cys189 form a disulfide bridge. The chain crosses the membrane as a helical span at residues 100-120; it reads QFFLFTICAGTECFLLAVMAY. The Cytoplasmic portion of the chain corresponds to 121–139; it reads DRYAAIRNPLLYTVAMNPR. Residues 140 to 160 traverse the membrane as a helical segment; that stretch reads LCWSLVVGAYVCGVSGAILRT. At 161-197 the chain is on the extracellular side; sequence TCTFTLSFCKDNQINFFFCDLPPLLKLACSDTANIEI. A helical transmembrane segment spans residues 198–217; the sequence is VIIFFGNFVILANASVILIS. At 218-237 the chain is on the cytoplasmic side; sequence YLLIIKTILKVKSSGGRAKT. Residues 238–258 traverse the membrane as a helical segment; sequence FSTCASHITAVALFFGALIFM. Over 259-271 the chain is Extracellular; it reads YLQSGSGKSLEED. Residues 272 to 292 form a helical membrane-spanning segment; sequence KVVSVFYTVVIPMLNPLIYSL. At 293–314 the chain is on the cytoplasmic side; it reads RNKDVKDAFRKVARRLQVSLSM.

This sequence belongs to the G-protein coupled receptor 1 family.

The protein resides in the cell membrane. In terms of biological role, odorant receptor. In Homo sapiens (Human), this protein is Olfactory receptor 9I1 (OR9I1).